Consider the following 421-residue polypeptide: UDP-N-acetylglucosamine 1-carboxyvinyltransferase (421 aa).

Phosphoenolpyruvate is bound at residue 22–23; that stretch reads KN. R92 contacts UDP-N-acetyl-alpha-D-glucosamine. C116 functions as the Proton donor in the catalytic mechanism. C116 is modified (2-(S-cysteinyl)pyruvic acid O-phosphothioketal). UDP-N-acetyl-alpha-D-glucosamine contacts are provided by D306 and V328.

It belongs to the EPSP synthase family. MurA subfamily.

It localises to the cytoplasm. It catalyses the reaction phosphoenolpyruvate + UDP-N-acetyl-alpha-D-glucosamine = UDP-N-acetyl-3-O-(1-carboxyvinyl)-alpha-D-glucosamine + phosphate. It functions in the pathway cell wall biogenesis; peptidoglycan biosynthesis. Its function is as follows. Cell wall formation. Adds enolpyruvyl to UDP-N-acetylglucosamine. This is UDP-N-acetylglucosamine 1-carboxyvinyltransferase from Thermotoga petrophila (strain ATCC BAA-488 / DSM 13995 / JCM 10881 / RKU-1).